A 549-amino-acid chain; its full sequence is Glucose-6-phosphate isomerase (549 aa).

E353 functions as the Proton donor in the catalytic mechanism. Active-site residues include H384 and K510.

The protein belongs to the GPI family.

The protein resides in the cytoplasm. The enzyme catalyses alpha-D-glucose 6-phosphate = beta-D-fructose 6-phosphate. It participates in carbohydrate biosynthesis; gluconeogenesis. The protein operates within carbohydrate degradation; glycolysis; D-glyceraldehyde 3-phosphate and glycerone phosphate from D-glucose: step 2/4. In terms of biological role, catalyzes the reversible isomerization of glucose-6-phosphate to fructose-6-phosphate. The chain is Glucose-6-phosphate isomerase from Mycolicibacterium smegmatis (Mycobacterium smegmatis).